The primary structure comprises 321 residues: Protein FAM110C (321 aa).

Disordered stretches follow at residues 1–84 and 111–203; these read MRAL…APAP and RGSG…SQSD. 2 stretches are compositionally biased toward basic and acidic residues: residues 15 to 46 and 131 to 145; these read LLPR…DRAK and GKDK…DEGK. The segment covering 169–181 has biased composition (low complexity); sequence APAARSAAPSSVP. Ser241 carries the phosphoserine modification.

It belongs to the FAM110 family. Interacts with AKT1; the interaction is transient and follows AKT1 activation. Interacts with PPP2CA and alpha-tubulin. Detected in stomach, thyroid, trachea, adrenal gland and testis, and at low levels in prostate, ovary, intestine, colon, spinal cord and lymph node.

The protein localises to the cytoplasm. It localises to the cytoskeleton. Its subcellular location is the microtubule organizing center. The protein resides in the centrosome. It is found in the spindle pole. The protein localises to the nucleus. Functionally, may play a role in microtubule organization. May play a role in cell spreading and cell migration of epithelial cells; the function may involve the AKT1 signaling pathway. This is Protein FAM110C (FAM110C) from Homo sapiens (Human).